The sequence spans 83 residues: UPF0297 protein DSY2420 (83 aa).

The protein belongs to the UPF0297 family.

This is UPF0297 protein DSY2420 from Desulfitobacterium hafniense (strain Y51).